Consider the following 245-residue polypeptide: tRNA pseudouridine synthase A (245 aa).

Asp52 acts as the Nucleophile in catalysis. A substrate-binding site is contributed by Tyr112.

Belongs to the tRNA pseudouridine synthase TruA family. In terms of assembly, homodimer.

It catalyses the reaction uridine(38/39/40) in tRNA = pseudouridine(38/39/40) in tRNA. Functionally, formation of pseudouridine at positions 38, 39 and 40 in the anticodon stem and loop of transfer RNAs. The chain is tRNA pseudouridine synthase A from Dictyoglomus turgidum (strain DSM 6724 / Z-1310).